We begin with the raw amino-acid sequence, 465 residues long: Glucose-1-phosphate adenylyltransferase (465 aa).

Alpha-D-glucose 1-phosphate contacts are provided by residues Gly164, 181-182 (EK), and Ser199.

Belongs to the bacterial/plant glucose-1-phosphate adenylyltransferase family. In terms of assembly, homotetramer.

It carries out the reaction alpha-D-glucose 1-phosphate + ATP + H(+) = ADP-alpha-D-glucose + diphosphate. It functions in the pathway glycan biosynthesis; glycogen biosynthesis. In terms of biological role, involved in the biosynthesis of ADP-glucose, a building block required for the elongation reactions to produce glycogen. Catalyzes the reaction between ATP and alpha-D-glucose 1-phosphate (G1P) to produce pyrophosphate and ADP-Glc. The protein is Glucose-1-phosphate adenylyltransferase of Arthrobacter sp. (strain FB24).